The primary structure comprises 314 residues: tRNA selenocysteine 1-associated protein 1 (314 aa).

2 consecutive RRM domains span residues 2–85 (NSLW…RSNY) and 94–173 (FSLF…LASS).

This sequence belongs to the RRM TRSPAP family.

It localises to the nucleus. Its subcellular location is the cytoplasm. Involved in the early steps of selenocysteine biosynthesis and tRNA(Sec) charging to the later steps resulting in the cotranslational incorporation of selenocysteine into selenoproteins. In Danio rerio (Zebrafish), this protein is tRNA selenocysteine 1-associated protein 1.